The following is a 321-amino-acid chain: Cilia- and flagella-associated protein 161 (321 aa).

The interval 275-321 is disordered; it reads LSTMLDLPKPPAEDTRALEQEREQVSDPGARSTPDARGCVPQCTLPM. Over residues 285–299 the composition is skewed to basic and acidic residues; it reads PAEDTRALEQEREQV.

As to quaternary structure, microtubule inner protein component of sperm flagellar doublet microtubules. Expressed in trachea multiciliated cells.

It localises to the cytoplasm. The protein resides in the cytoskeleton. Its subcellular location is the cilium axoneme. The protein localises to the flagellum axoneme. Functionally, microtubule inner protein (MIP) part of the dynein-decorated doublet microtubules (DMTs) in cilia axoneme, which is required for motile cilia beating. This Bos taurus (Bovine) protein is Cilia- and flagella-associated protein 161.